A 568-amino-acid polypeptide reads, in one-letter code: Light-independent protochlorophyllide reductase subunit B (568 aa).

Residue D36 participates in [4Fe-4S] cluster binding. Residue D293 is the Proton donor of the active site. 437–438 is a substrate binding site; the sequence is GM. The tract at residues 476–517 is disordered; it reads ANGHPEAGVSVGAAEPSAAPSRSVVTEESNRATTPSSSTVHP. Residues 498–515 show a composition bias toward polar residues; sequence SVVTEESNRATTPSSSTV.

This sequence belongs to the ChlB/BchB/BchZ family. As to quaternary structure, protochlorophyllide reductase is composed of three subunits; BchL, BchN and BchB. Forms a heterotetramer of two BchB and two BchN subunits. The cofactor is [4Fe-4S] cluster.

The catalysed reaction is chlorophyllide a + oxidized 2[4Fe-4S]-[ferredoxin] + 2 ADP + 2 phosphate = protochlorophyllide a + reduced 2[4Fe-4S]-[ferredoxin] + 2 ATP + 2 H2O. It participates in porphyrin-containing compound metabolism; bacteriochlorophyll biosynthesis (light-independent). Its function is as follows. Component of the dark-operative protochlorophyllide reductase (DPOR) that uses Mg-ATP and reduced ferredoxin to reduce ring D of protochlorophyllide (Pchlide) to form chlorophyllide a (Chlide). This reaction is light-independent. The NB-protein (BchN-BchB) is the catalytic component of the complex. The polypeptide is Light-independent protochlorophyllide reductase subunit B (Roseiflexus sp. (strain RS-1)).